Here is a 254-residue protein sequence, read N- to C-terminus: 4-hydroxy-tetrahydrodipicolinate reductase (254 aa).

NAD(+)-binding positions include 10–15 (GATGKV) and 101–103 (GTT). His157 serves as the catalytic Proton donor/acceptor. His158 contributes to the (S)-2,3,4,5-tetrahydrodipicolinate binding site. The active-site Proton donor is the Lys161. 167–168 (GT) is a (S)-2,3,4,5-tetrahydrodipicolinate binding site.

This sequence belongs to the DapB family.

It is found in the cytoplasm. It catalyses the reaction (S)-2,3,4,5-tetrahydrodipicolinate + NAD(+) + H2O = (2S,4S)-4-hydroxy-2,3,4,5-tetrahydrodipicolinate + NADH + H(+). The enzyme catalyses (S)-2,3,4,5-tetrahydrodipicolinate + NADP(+) + H2O = (2S,4S)-4-hydroxy-2,3,4,5-tetrahydrodipicolinate + NADPH + H(+). It functions in the pathway amino-acid biosynthesis; L-lysine biosynthesis via DAP pathway; (S)-tetrahydrodipicolinate from L-aspartate: step 4/4. In terms of biological role, catalyzes the conversion of 4-hydroxy-tetrahydrodipicolinate (HTPA) to tetrahydrodipicolinate. This Symbiobacterium thermophilum (strain DSM 24528 / JCM 14929 / IAM 14863 / T) protein is 4-hydroxy-tetrahydrodipicolinate reductase.